A 514-amino-acid polypeptide reads, in one-letter code: uncharacterized protein (514 aa).

Disordered stretches follow at residues 1-68 (MSSP…SESE), 109-244 (VPPP…RQAS), and 272-484 (RPAV…AQGC). Positions 368-384 (KPQKPKHSSPGKKPAGR) are enriched in basic residues. Residues 385–405 (KTRESQAAAREDNDPNRDEVP) show a composition bias toward basic and acidic residues.

This is an uncharacterized protein from Homo sapiens (Human).